The chain runs to 234 residues: Proteasome subunit alpha (234 aa).

This sequence belongs to the peptidase T1A family. In terms of assembly, the 20S proteasome core is composed of 14 alpha and 14 beta subunits that assemble into four stacked heptameric rings, resulting in a barrel-shaped structure. The two inner rings, each composed of seven catalytic beta subunits, are sandwiched by two outer rings, each composed of seven alpha subunits. The catalytic chamber with the active sites is on the inside of the barrel. Has a gated structure, the ends of the cylinder being occluded by the N-termini of the alpha-subunits. Is capped at one or both ends by the proteasome regulatory ATPase, PAN.

Its subcellular location is the cytoplasm. With respect to regulation, the formation of the proteasomal ATPase PAN-20S proteasome complex, via the docking of the C-termini of PAN into the intersubunit pockets in the alpha-rings, triggers opening of the gate for substrate entry. Interconversion between the open-gate and close-gate conformations leads to a dynamic regulation of the 20S proteasome proteolysis activity. Its function is as follows. Component of the proteasome core, a large protease complex with broad specificity involved in protein degradation. The chain is Proteasome subunit alpha from Picrophilus torridus (strain ATCC 700027 / DSM 9790 / JCM 10055 / NBRC 100828 / KAW 2/3).